The chain runs to 486 residues: Membrane-bound lytic murein transglycosylase F (486 aa).

An N-terminal signal peptide occupies residues 1–21; it reads MKRLKINYILIGVVTLLLALA. Positions 22-268 are non-LT domain; sequence LWPNITWRGG…RLEEKYLGHV (247 aa). The LT domain stretch occupies residues 269 to 486; sequence GSFDYVDTKT…AVTPELALNF (218 aa). Glu-313 is an active-site residue.

It in the N-terminal section; belongs to the bacterial solute-binding protein 3 family. The protein in the C-terminal section; belongs to the transglycosylase Slt family.

It localises to the cell outer membrane. It carries out the reaction Exolytic cleavage of the (1-&gt;4)-beta-glycosidic linkage between N-acetylmuramic acid (MurNAc) and N-acetylglucosamine (GlcNAc) residues in peptidoglycan, from either the reducing or the non-reducing ends of the peptidoglycan chains, with concomitant formation of a 1,6-anhydrobond in the MurNAc residue.. In terms of biological role, murein-degrading enzyme that degrades murein glycan strands and insoluble, high-molecular weight murein sacculi, with the concomitant formation of a 1,6-anhydromuramoyl product. Lytic transglycosylases (LTs) play an integral role in the metabolism of the peptidoglycan (PG) sacculus. Their lytic action creates space within the PG sacculus to allow for its expansion as well as for the insertion of various structures such as secretion systems and flagella. This chain is Membrane-bound lytic murein transglycosylase F, found in Serratia proteamaculans (strain 568).